Here is a 152-residue protein sequence, read N- to C-terminus: SsrA-binding protein (152 aa).

This sequence belongs to the SmpB family.

The protein resides in the cytoplasm. Functionally, required for rescue of stalled ribosomes mediated by trans-translation. Binds to transfer-messenger RNA (tmRNA), required for stable association of tmRNA with ribosomes. tmRNA and SmpB together mimic tRNA shape, replacing the anticodon stem-loop with SmpB. tmRNA is encoded by the ssrA gene; the 2 termini fold to resemble tRNA(Ala) and it encodes a 'tag peptide', a short internal open reading frame. During trans-translation Ala-aminoacylated tmRNA acts like a tRNA, entering the A-site of stalled ribosomes, displacing the stalled mRNA. The ribosome then switches to translate the ORF on the tmRNA; the nascent peptide is terminated with the 'tag peptide' encoded by the tmRNA and targeted for degradation. The ribosome is freed to recommence translation, which seems to be the essential function of trans-translation. The polypeptide is SsrA-binding protein (Helicobacter pylori (strain Shi470)).